We begin with the raw amino-acid sequence, 349 residues long: Phosphoribosylformylglycinamidine cyclo-ligase (349 aa).

Belongs to the AIR synthase family.

The protein localises to the cytoplasm. The enzyme catalyses 2-formamido-N(1)-(5-O-phospho-beta-D-ribosyl)acetamidine + ATP = 5-amino-1-(5-phospho-beta-D-ribosyl)imidazole + ADP + phosphate + H(+). The protein operates within purine metabolism; IMP biosynthesis via de novo pathway; 5-amino-1-(5-phospho-D-ribosyl)imidazole from N(2)-formyl-N(1)-(5-phospho-D-ribosyl)glycinamide: step 2/2. This chain is Phosphoribosylformylglycinamidine cyclo-ligase, found in Methanococcus maripaludis (strain C6 / ATCC BAA-1332).